The following is a 226-amino-acid chain: Small ribosomal subunit protein uS5 (226 aa).

A compositionally biased stretch (polar residues) spans 1 to 18 (MAAPQRSRTTGAPSSGGP). A disordered region spans residues 1-45 (MAAPQRSRTTGAPSSGGPSENERGRGGDRRGGDRRGGDRRGGDDR). Residues 20-45 (ENERGRGGDRRGGDRRGGDRRGGDDR) show a composition bias toward basic and acidic residues. The region spanning 48–111 (FVERVVTINR…EEAKKNFFRV (64 aa)) is the S5 DRBM domain.

The protein belongs to the universal ribosomal protein uS5 family. In terms of assembly, part of the 30S ribosomal subunit. Contacts proteins S4 and S8.

Functionally, with S4 and S12 plays an important role in translational accuracy. Its function is as follows. Located at the back of the 30S subunit body where it stabilizes the conformation of the head with respect to the body. The sequence is that of Small ribosomal subunit protein uS5 from Beutenbergia cavernae (strain ATCC BAA-8 / DSM 12333 / CCUG 43141 / JCM 11478 / NBRC 16432 / NCIMB 13614 / HKI 0122).